The chain runs to 353 residues: Inactive ADP-ribosyltransferase ARH2 (353 aa).

The residue at position 27 (S27) is a Phosphoserine.

This sequence belongs to the ADP-ribosylglycohydrolase family.

It localises to the cytoplasm. The protein resides in the myofibril. It is found in the sarcomere. Functionally, required for myofibril assembly and outgrowth of the cardiac chambers in the developing heart. Appears to be catalytically inactive, showing no activity against O-acetyl-ADP-ribose. This is Inactive ADP-ribosyltransferase ARH2 (Adprhl1) from Rattus norvegicus (Rat).